A 158-amino-acid polypeptide reads, in one-letter code: NADH-quinone oxidoreductase subunit B (158 aa).

[4Fe-4S] cluster is bound by residues Cys-37, Cys-38, Cys-102, and Cys-132.

It belongs to the complex I 20 kDa subunit family. NDH-1 is composed of 14 different subunits. Subunits NuoB, C, D, E, F, and G constitute the peripheral sector of the complex. It depends on [4Fe-4S] cluster as a cofactor.

The protein localises to the cell inner membrane. The enzyme catalyses a quinone + NADH + 5 H(+)(in) = a quinol + NAD(+) + 4 H(+)(out). NDH-1 shuttles electrons from NADH, via FMN and iron-sulfur (Fe-S) centers, to quinones in the respiratory chain. Couples the redox reaction to proton translocation (for every two electrons transferred, four hydrogen ions are translocated across the cytoplasmic membrane), and thus conserves the redox energy in a proton gradient. The protein is NADH-quinone oxidoreductase subunit B of Legionella pneumophila (strain Paris).